A 101-amino-acid polypeptide reads, in one-letter code: Urease subunit gamma (101 aa).

It belongs to the urease gamma subunit family. As to quaternary structure, heterotrimer of UreA (gamma), UreB (beta) and UreC (alpha) subunits. Three heterotrimers associate to form the active enzyme.

The protein localises to the cytoplasm. It carries out the reaction urea + 2 H2O + H(+) = hydrogencarbonate + 2 NH4(+). The protein operates within nitrogen metabolism; urea degradation; CO(2) and NH(3) from urea (urease route): step 1/1. This chain is Urease subunit gamma, found in Corynebacterium kroppenstedtii (strain DSM 44385 / JCM 11950 / CIP 105744 / CCUG 35717).